We begin with the raw amino-acid sequence, 37 residues long: Cytochrome b6-f complex subunit 5 (37 aa).

A helical membrane pass occupies residues 5 to 25; sequence LLSGIVLGLVPVTIAGLFVTA.

Belongs to the PetG family. The 4 large subunits of the cytochrome b6-f complex are cytochrome b6, subunit IV (17 kDa polypeptide, PetD), cytochrome f and the Rieske protein, while the 4 small subunits are PetG, PetL, PetM and PetN. The complex functions as a dimer.

It localises to the plastid. Its subcellular location is the chloroplast thylakoid membrane. Functionally, component of the cytochrome b6-f complex, which mediates electron transfer between photosystem II (PSII) and photosystem I (PSI), cyclic electron flow around PSI, and state transitions. PetG is required for either the stability or assembly of the cytochrome b6-f complex. The chain is Cytochrome b6-f complex subunit 5 from Chlorella vulgaris (Green alga).